The primary structure comprises 42 residues: uncharacterized protein (42 aa).

It localises to the cytoplasm. This is an uncharacterized protein from Escherichia coli (strain K12).